Consider the following 698-residue polypeptide: UvrABC system protein B (698 aa).

Positions 28-414 (RRILAGERDV…SGGEFVEQVI (387 aa)) constitute a Helicase ATP-binding domain. Residue 41–48 (GATGTGKS) coordinates ATP. A Beta-hairpin motif is present at residues 94-117 (YYDYYQPEAYIAQTDTYIEKDSSI). Residues 432-598 (QIDDLIGEIR…PLRKKIADIL (167 aa)) form the Helicase C-terminal domain. The tract at residues 609–629 (DTVQVGGSGRNVSRGRRAQSE) is disordered. The region spanning 653 to 688 (ADLIKDLTAQMMAAASDLQFELAARFRDEIADLKKE) is the UVR domain.

It belongs to the UvrB family. As to quaternary structure, forms a heterotetramer with UvrA during the search for lesions. Interacts with UvrC in an incision complex.

It is found in the cytoplasm. In terms of biological role, the UvrABC repair system catalyzes the recognition and processing of DNA lesions. A damage recognition complex composed of 2 UvrA and 2 UvrB subunits scans DNA for abnormalities. Upon binding of the UvrA(2)B(2) complex to a putative damaged site, the DNA wraps around one UvrB monomer. DNA wrap is dependent on ATP binding by UvrB and probably causes local melting of the DNA helix, facilitating insertion of UvrB beta-hairpin between the DNA strands. Then UvrB probes one DNA strand for the presence of a lesion. If a lesion is found the UvrA subunits dissociate and the UvrB-DNA preincision complex is formed. This complex is subsequently bound by UvrC and the second UvrB is released. If no lesion is found, the DNA wraps around the other UvrB subunit that will check the other stand for damage. The polypeptide is UvrABC system protein B (Mycobacterium leprae (strain TN)).